The chain runs to 914 residues: Exoglucanase-2 (914 aa).

Positions 1–33 (MKRRLMKGISLLTLVFLIGIMLQLSLKSELTAY) are cleaved as a signal peptide. The region spanning 763–914 (VEGVLIIQSF…SGNLVYGIEP (152 aa)) is the CBM3 domain.

Belongs to the glycosyl hydrolase 48 (cellulase L) family.

It carries out the reaction Hydrolysis of (1-&gt;4)-beta-D-glucosidic linkages in cellulose and cellotetraose, releasing cellobiose from the non-reducing ends of the chains.. The protein is Exoglucanase-2 (celY) of Thermoclostridium stercorarium (strain ATCC 35414 / DSM 8532 / NCIMB 11754) (Clostridium stercorarium).